Consider the following 199-residue polypeptide: Large ribosomal subunit protein bL9 (199 aa).

The segment at T169 to A199 is disordered.

This sequence belongs to the bacterial ribosomal protein bL9 family.

Functionally, binds to the 23S rRNA. This chain is Large ribosomal subunit protein bL9, found in Novosphingobium aromaticivorans (strain ATCC 700278 / DSM 12444 / CCUG 56034 / CIP 105152 / NBRC 16084 / F199).